The sequence spans 600 residues: Aspartate--tRNA(Asp/Asn) ligase (600 aa).

Glu175 contacts L-aspartate. Positions Gln199–Lys202 are aspartate. Arg221 is a binding site for L-aspartate. Residues Arg221–Glu223 and Gln230 each bind ATP. An L-aspartate-binding site is contributed by His453. Glu487 provides a ligand contact to ATP. Arg494 is a binding site for L-aspartate. Gly539–Arg542 contributes to the ATP binding site. The disordered stretch occupies residues Ala578–Lys600. Over residues Gln580–Pro590 the composition is skewed to basic and acidic residues.

The protein belongs to the class-II aminoacyl-tRNA synthetase family. Type 1 subfamily. In terms of assembly, homodimer.

Its subcellular location is the cytoplasm. It catalyses the reaction tRNA(Asx) + L-aspartate + ATP = L-aspartyl-tRNA(Asx) + AMP + diphosphate. Aspartyl-tRNA synthetase with relaxed tRNA specificity since it is able to aspartylate not only its cognate tRNA(Asp) but also tRNA(Asn). Reaction proceeds in two steps: L-aspartate is first activated by ATP to form Asp-AMP and then transferred to the acceptor end of tRNA(Asp/Asn). The polypeptide is Aspartate--tRNA(Asp/Asn) ligase (Corynebacterium jeikeium (strain K411)).